The sequence spans 1489 residues: WD repeat-containing protein 7 (1489 aa).

WD repeat units lie at residues 17 to 56, 62 to 104, 156 to 199, 324 to 366, 404 to 443, 462 to 507, and 558 to 597; these read APTHCISSILLTDDGGTIVTGCHDGQICLWDVSVELEVNP, GHTA…CIEF, ISPD…SGMQ, VICP…EKQE, NEPLKVTASVYIPAHGRLVCGREDGSIIIVPATQTAIVQL, GHRN…MKHI, and RHLFPIQVIKWRPSDDYLVVGCTDGSVYVWQMDTGALDRC. Disordered regions lie at residues 754-783 and 911-947; these read IKEHLLDEEEDEEEARRQSREDSDPEYRAS and GDHMKKGPTRPPRPGTPDLSKARDSPPPSSNIVQGQI. Over residues 767-782 the composition is skewed to basic and acidic residues; the sequence is EARRQSREDSDPEYRA. Residue Ser935 is modified to Phosphoserine. 2 WD repeats span residues 1350-1389 and 1391-1431; these read PAICRFYMVSYYERSHRIAVGARHGSVALYDIRTGKCQTI and GHKG…LGSI. Position 1455 is a phosphoserine (Ser1455).

This Mus musculus (Mouse) protein is WD repeat-containing protein 7 (Wdr7).